The primary structure comprises 353 residues: Lipase-specific foldase (353 aa).

Over 1–19 (MAQADRPARGGLAARPMRG) the chain is Cytoplasmic. A helical membrane pass occupies residues 20-40 (ASFALAGLVACAACAAVVLWL). Residues 41 to 353 (RPAAPSPAPA…AASLDRGAGG (313 aa)) are Periplasmic-facing.

This sequence belongs to the lipase chaperone family. In terms of assembly, monomer. Interacts with lipase (lip).

The protein localises to the cell inner membrane. Its function is as follows. Involved in the folding of the extracellular lipase (lip) during its passage through the periplasm. The chain is Lipase-specific foldase from Burkholderia plantarii.